A 328-amino-acid polypeptide reads, in one-letter code: tRNA uridine(34) hydroxylase (328 aa).

A Rhodanese domain is found at Leu130–Glu224. Residue Cys184 is the Cysteine persulfide intermediate of the active site.

This sequence belongs to the TrhO family.

It catalyses the reaction uridine(34) in tRNA + AH2 + O2 = 5-hydroxyuridine(34) in tRNA + A + H2O. In terms of biological role, catalyzes oxygen-dependent 5-hydroxyuridine (ho5U) modification at position 34 in tRNAs. The protein is tRNA uridine(34) hydroxylase of Streptococcus pyogenes serotype M12 (strain MGAS2096).